The sequence spans 174 residues: 3-hydroxydecanoyl-[acyl-carrier-protein] dehydratase (174 aa).

H73 is an active-site residue.

The protein belongs to the thioester dehydratase family. FabA subfamily. Homodimer.

It localises to the cytoplasm. It catalyses the reaction a (3R)-hydroxyacyl-[ACP] = a (2E)-enoyl-[ACP] + H2O. It carries out the reaction (3R)-hydroxydecanoyl-[ACP] = (2E)-decenoyl-[ACP] + H2O. The enzyme catalyses (2E)-decenoyl-[ACP] = (3Z)-decenoyl-[ACP]. It participates in lipid metabolism; fatty acid biosynthesis. In terms of biological role, necessary for the introduction of cis unsaturation into fatty acids. Catalyzes the dehydration of (3R)-3-hydroxydecanoyl-ACP to E-(2)-decenoyl-ACP and then its isomerization to Z-(3)-decenoyl-ACP. Can catalyze the dehydratase reaction for beta-hydroxyacyl-ACPs with saturated chain lengths up to 16:0, being most active on intermediate chain length. The sequence is that of 3-hydroxydecanoyl-[acyl-carrier-protein] dehydratase from Cellvibrio japonicus (strain Ueda107) (Pseudomonas fluorescens subsp. cellulosa).